The following is a 767-amino-acid chain: MDRSRVLEQLIPELTRLLSLLDHEYLSDSTLEKKMAVASLLQSLQPLPAKEVSFLYVNTADLHSGPSFVESLFEEFDCDLGDLRDMSDDGERSKEASPEPIKSPSLRSTADVPPPLPNKPPPEDYYEEALPLGPGKSPEYISSHNGCSPAQSIVDGYYEDADSSYPTTRMNGESKSSYNDSDAMSSSYESYDEEEEEEKGRQPKHQWPSEEASMHLVRDCRICAFLLRKKRFGQWAKQLTVIKEEQLLCYKSSKDRQPHLRLPLDVCTVVYVPKDSRHKRHELRFSQGATEVLVLALQSREQAEEWLKVIREVSRPIGGAESLEVPRSPVILCKLDQDKRLSQEKQNSDSDSLGMNDSSSTLSRREACEHGKGKKNSLAELKDSMSRAAGRKITRIISFSKKKALSEDLQTFSSEDEAPCCGYLNVLVNHGWKERWCRLRCNTLYFHKDRTDLHTHVNAIALRGCEVAPGFGPRHPFAFRILRNRQEVAILEASCSEDMGRWLGLLLVEMGSKVTPEALHYDYVDVETLTSIVSAGRNSFLYAQSCQDQWPEPRIYDEVPYEKVQDEEPQRPTGAQVKRHASSCSEKSHRADPQVKVKRHASSANQYKYGKNRAEEDARRYLVEKERLEKEKETIRTELTALRQEKKELKEAIRNNPGAKLKALEEAVATLDAQCRAKEEQRIDLELKLVAVKERLQQSLAGGPALGLSVSSKSKSQETTNKPQSSVPEQSLPVNCVSEMRKRSPSIVTSNQGRVLQKAKEWEMKKT.

Over residues 83–97 the composition is skewed to basic and acidic residues; sequence LRDMSDDGERSKEAS. Residues 83–145 form a disordered region; it reads LRDMSDDGER…KSPEYISSHN (63 aa). Phosphoserine is present on residues Ser87, Ser93, Ser97, Ser103, and Ser152. Positions 164–173 are enriched in polar residues; sequence SYPTTRMNGE. The disordered stretch occupies residues 164 to 210; that stretch reads SYPTTRMNGESKSSYNDSDAMSSSYESYDEEEEEEKGRQPKHQWPSE. Over residues 174 to 189 the composition is skewed to low complexity; the sequence is SKSSYNDSDAMSSSYE. The region spanning 219-315 is the PH 1 domain; that stretch reads DCRICAFLLR…WLKVIREVSR (97 aa). Phosphoserine occurs at positions 328 and 342. The tract at residues 341 to 381 is disordered; sequence LSQEKQNSDSDSLGMNDSSSTLSRREACEHGKGKKNSLAEL. The segment covering 349-362 has biased composition (polar residues); that stretch reads DSDSLGMNDSSSTL. The PH 2 domain occupies 417–511; it reads EAPCCGYLNV…WLGLLLVEMG (95 aa). At Tyr556 the chain carries Phosphotyrosine. Residues 563-605 are disordered; sequence KVQDEEPQRPTGAQVKRHASSCSEKSHRADPQVKVKRHASSAN. A compositionally biased stretch (basic and acidic residues) spans 586-595; the sequence is EKSHRADPQV. Residues 610-700 adopt a coiled-coil conformation; sequence GKNRAEEDAR…AVKERLQQSL (91 aa). Residues 704–767 form a disordered region; the sequence is PALGLSVSSK…KAKEWEMKKT (64 aa). A compositionally biased stretch (polar residues) spans 709-733; sequence SVSSKSKSQETTNKPQSSVPEQSLP. A Phosphoserine modification is found at Ser746. A compositionally biased stretch (basic and acidic residues) spans 758–767; sequence KAKEWEMKKT.

Interacts with CTTN.

It is found in the cytoplasm. Its subcellular location is the cell projection. The protein resides in the podosome. The protein localises to the invadopodium. In terms of biological role, may be involved in podosome and invadosome formation. The sequence is that of Actin filament-associated protein 1-like 1 (Afap1l1) from Rattus norvegicus (Rat).